A 365-amino-acid polypeptide reads, in one-letter code: tRNA-specific 2-thiouridylase MnmA (365 aa).

Residues 6–13 and Leu-32 contribute to the ATP site; that span reads AMSGGVDS. The active-site Nucleophile is Cys-101. The cysteines at positions 101 and 199 are disulfide-linked. Gly-125 is an ATP binding site. An interaction with tRNA region spans residues 149–151; the sequence is KDQ. The active-site Cysteine persulfide intermediate is Cys-199.

It belongs to the MnmA/TRMU family.

It localises to the cytoplasm. It catalyses the reaction S-sulfanyl-L-cysteinyl-[protein] + uridine(34) in tRNA + AH2 + ATP = 2-thiouridine(34) in tRNA + L-cysteinyl-[protein] + A + AMP + diphosphate + H(+). Functionally, catalyzes the 2-thiolation of uridine at the wobble position (U34) of tRNA, leading to the formation of s(2)U34. The polypeptide is tRNA-specific 2-thiouridylase MnmA (Corynebacterium efficiens (strain DSM 44549 / YS-314 / AJ 12310 / JCM 11189 / NBRC 100395)).